Reading from the N-terminus, the 794-residue chain is ALG-2 interacting protein X (794 aa).

In terms of domain architecture, BRO1 spans 1-385 (MLSIERKRTE…DNIEFHNQSA (385 aa)). Coiled-coil stretches lie at residues 499 to 568 (SFIR…LCKK) and 600 to 655 (LNES…NLDE). The interval 695 to 794 (GVNPHSPLTS…PPYNSNNKHY (100 aa)) is disordered. The segment covering 698-712 (PHSPLTSPSPSLQSP) has biased composition (low complexity). Over residues 713–722 (VNNYPNQFSS) the composition is skewed to polar residues. 2 stretches are compositionally biased toward low complexity: residues 723–742 (PQYH…YVPS) and 749–764 (YSYN…QFGG). Positions 765–787 (PLPPPQSFSAPPPPQSFTAPPPY) are enriched in pro residues.

Self-associates; the interaction is calcium-independent Interacts with pefa; the interaction is calcium-dependent. Interacts with pefb; the interaction is calcium-dependent.

It localises to the cytoplasm. The protein resides in the cytoplasmic vesicle membrane. Its subcellular location is the endosome. Functionally, unknown. Required for development but not for cell death. The sequence is that of ALG-2 interacting protein X (alxA) from Dictyostelium discoideum (Social amoeba).